A 138-amino-acid polypeptide reads, in one-letter code: MKPAERRKARHLALQAIYQWQLAKDNVADIVEQFKLEQPTKGVDLPYFELLLTGVVNNVTNLDATFSPFLSRKLDDLDQIDKGVLRLACYELTYCKDVPYKVVINEAIELAKAFATDDSHKFVNGVLDKVVKQMGLRQ.

The protein belongs to the NusB family.

Functionally, involved in transcription antitermination. Required for transcription of ribosomal RNA (rRNA) genes. Binds specifically to the boxA antiterminator sequence of the ribosomal RNA (rrn) operons. This Tolumonas auensis (strain DSM 9187 / NBRC 110442 / TA 4) protein is Transcription antitermination protein NusB.